The sequence spans 158 residues: Mitochondrial import inner membrane translocase subunit TIM14 (158 aa).

Residues 1 to 55 are Mitochondrial intermembrane-facing; the sequence is MAPPTIEIPQLPIPGEDNSAHPAQQIRLEQAAVPQQKRGMDLYFDKVVDFVGEHP. A helical transmembrane segment spans residues 56 to 78; that stretch reads VVGGIGGFVALYAAAGLWRAVSI. Over 79–158 the chain is Mitochondrial matrix; that stretch reads RMNGGKEATK…DFLEKRGIRK (80 aa). Residues 102 to 158 form the J domain; it reads EALAILNLTESTLTKKRVKDVHRKIMLANHPDKGGSPYLATKINEAKDFLEKRGIRK.

This sequence belongs to the TIM14 family. In terms of assembly, heterodimer with PAM16. Component of the PAM complex, at least composed of mtHsp70, MGE1, TIM44, PAM16, PAM17 and PAM18.

The protein localises to the mitochondrion inner membrane. Its function is as follows. Essential component of the PAM complex, a complex required for the translocation of transit peptide-containing proteins from the inner membrane into the mitochondrial matrix in an ATP-dependent manner. In the complex, it is required to stimulate activity of mtHSP70 (SSC1). The chain is Mitochondrial import inner membrane translocase subunit TIM14 (PAM18) from Eremothecium gossypii (strain ATCC 10895 / CBS 109.51 / FGSC 9923 / NRRL Y-1056) (Yeast).